The primary structure comprises 499 residues: Low-affinity inorganic phosphate transporter PitB (499 aa).

10 helical membrane passes run 5–25 (FVGLDIYTGLLLLLALAFVLF), 52–72 (LAVVMAAFFNFFGVLLGGLSV), 94–114 (LAMVFSMLLAAIIWNLGTWFF), 124–144 (LIGAIIGIGLTNALLTGSSVM), 155–175 (IFSSLIVSPIVGLVIAGGLIF), 207–227 (PFWTRIALIVSAAGVAFSHGA), 233–253 (GIGLVMLVLVGIAPAGFVVNM), 382–402 (APVWIIMAVALALGIGTMIGW), 430–450 (AAVSIGLASYIGMPVSTTHVL), and 473–493 (ILMAWVFTLPAAIFLSGGLYW).

Belongs to the inorganic phosphate transporter (PiT) (TC 2.A.20) family. Pit subfamily.

It localises to the cell inner membrane. The catalysed reaction is phosphate(in) + H(+)(in) = phosphate(out) + H(+)(out). Its function is as follows. Low-affinity inorganic phosphate transporter. The chain is Low-affinity inorganic phosphate transporter PitB from Escherichia coli (strain K12).